A 219-amino-acid polypeptide reads, in one-letter code: ATP-dependent Clp protease proteolytic subunit 3 (219 aa).

S112 serves as the catalytic Nucleophile. H137 is an active-site residue.

Belongs to the peptidase S14 family. In terms of assembly, fourteen ClpP subunits assemble into 2 heptameric rings which stack back to back to give a disk-like structure with a central cavity, resembling the structure of eukaryotic proteasomes.

The protein localises to the cytoplasm. The enzyme catalyses Hydrolysis of proteins to small peptides in the presence of ATP and magnesium. alpha-casein is the usual test substrate. In the absence of ATP, only oligopeptides shorter than five residues are hydrolyzed (such as succinyl-Leu-Tyr-|-NHMec, and Leu-Tyr-Leu-|-Tyr-Trp, in which cleavage of the -Tyr-|-Leu- and -Tyr-|-Trp bonds also occurs).. Functionally, cleaves peptides in various proteins in a process that requires ATP hydrolysis. Has a chymotrypsin-like activity. Plays a major role in the degradation of misfolded proteins. The protein is ATP-dependent Clp protease proteolytic subunit 3 of Streptomyces avermitilis (strain ATCC 31267 / DSM 46492 / JCM 5070 / NBRC 14893 / NCIMB 12804 / NRRL 8165 / MA-4680).